The following is a 520-amino-acid chain: Putative lipase ATG15 (520 aa).

The Cytoplasmic portion of the chain corresponds to 1-14 (MLHKSPSRKRFASP). Residues 15-35 (LHLGCILTLTVLCLIAYYFAL) form a helical; Signal-anchor for type II membrane protein membrane-spanning segment. Residues 36 to 520 (PDYLSVGKSS…WLGFCTKYEL (485 aa)) lie on the Lumenal side of the membrane. N-linked (GlcNAc...) asparagine glycans are attached at residues asparagine 173, asparagine 202, and asparagine 208. The Charge relay system role is filled by serine 332.

Belongs to the AB hydrolase superfamily. Lipase family. Binds to both phosphatidylinositol (PI) and phosphatidylinositol 3,5-bisphosphate (PIP2). Post-translationally, glycosylated.

The protein localises to the endosome. It is found in the multivesicular body membrane. The protein resides in the prevacuolar compartment membrane. It carries out the reaction a triacylglycerol + H2O = a diacylglycerol + a fatty acid + H(+). In terms of biological role, lipase which is essential for lysis of subvacuolar cytoplasm to vacuole targeted bodies and intravacuolar autophagic bodies. Involved in the lysis of intravacuolar multivesicular body (MVB) vesicles. The intravacuolar membrane disintegration by ATG15 is critical to life span extension. This is Putative lipase ATG15 (ATG15) from Saccharomyces cerevisiae (strain ATCC 204508 / S288c) (Baker's yeast).